The following is an 85-amino-acid chain: RNA-binding protein Hfq (85 aa).

Residues 9–68 (DPFLNALRRERVPVSIYLVNGIKLQGQVESFDQFVILLKNTVSQMVYKHAISTVVPARPF) form the Sm domain.

It belongs to the Hfq family. In terms of assembly, homohexamer.

Functionally, RNA chaperone that binds small regulatory RNA (sRNAs) and mRNAs to facilitate mRNA translational regulation in response to envelope stress, environmental stress and changes in metabolite concentrations. Also binds with high specificity to tRNAs. This Shewanella frigidimarina (strain NCIMB 400) protein is RNA-binding protein Hfq.